We begin with the raw amino-acid sequence, 200 residues long: Probable nicotinate-nucleotide adenylyltransferase (200 aa).

The protein belongs to the NadD family.

It catalyses the reaction nicotinate beta-D-ribonucleotide + ATP + H(+) = deamido-NAD(+) + diphosphate. It participates in cofactor biosynthesis; NAD(+) biosynthesis; deamido-NAD(+) from nicotinate D-ribonucleotide: step 1/1. In terms of biological role, catalyzes the reversible adenylation of nicotinate mononucleotide (NaMN) to nicotinic acid adenine dinucleotide (NaAD). In Clostridium botulinum (strain Alaska E43 / Type E3), this protein is Probable nicotinate-nucleotide adenylyltransferase.